Here is a 465-residue protein sequence, read N- to C-terminus: L-seryl-tRNA(Sec) selenium transferase (465 aa).

An N6-(pyridoxal phosphate)lysine modification is found at lysine 294.

It belongs to the SelA family. The cofactor is pyridoxal 5'-phosphate.

It is found in the cytoplasm. The catalysed reaction is L-seryl-tRNA(Sec) + selenophosphate + H(+) = L-selenocysteinyl-tRNA(Sec) + phosphate. The protein operates within aminoacyl-tRNA biosynthesis; selenocysteinyl-tRNA(Sec) biosynthesis; selenocysteinyl-tRNA(Sec) from L-seryl-tRNA(Sec) (bacterial route): step 1/1. Converts seryl-tRNA(Sec) to selenocysteinyl-tRNA(Sec) required for selenoprotein biosynthesis. In Maridesulfovibrio salexigens (strain ATCC 14822 / DSM 2638 / NCIMB 8403 / VKM B-1763) (Desulfovibrio salexigens), this protein is L-seryl-tRNA(Sec) selenium transferase.